A 177-amino-acid polypeptide reads, in one-letter code: Large ribosomal subunit protein uL6 (177 aa).

It belongs to the universal ribosomal protein uL6 family. As to quaternary structure, part of the 50S ribosomal subunit.

This protein binds to the 23S rRNA, and is important in its secondary structure. It is located near the subunit interface in the base of the L7/L12 stalk, and near the tRNA binding site of the peptidyltransferase center. This is Large ribosomal subunit protein uL6 from Rhodopseudomonas palustris (strain BisB5).